Here is a 1178-residue protein sequence, read N- to C-terminus: DNA-directed RNA polymerase subunit beta (1178 aa).

Belongs to the RNA polymerase beta chain family. As to quaternary structure, the RNAP catalytic core consists of 2 alpha, 1 beta, 1 beta' and 1 omega subunit. When a sigma factor is associated with the core the holoenzyme is formed, which can initiate transcription.

It carries out the reaction RNA(n) + a ribonucleoside 5'-triphosphate = RNA(n+1) + diphosphate. In terms of biological role, DNA-dependent RNA polymerase catalyzes the transcription of DNA into RNA using the four ribonucleoside triphosphates as substrates. The sequence is that of DNA-directed RNA polymerase subunit beta from Treponema pallidum (strain Nichols).